The primary structure comprises 448 residues: Methylenetetrahydrofolate--tRNA-(uracil-5-)-methyltransferase TrmFO (448 aa).

Residue 10 to 15 participates in FAD binding; sequence GAGLAG.

This sequence belongs to the MnmG family. TrmFO subfamily. FAD serves as cofactor.

It localises to the cytoplasm. It catalyses the reaction uridine(54) in tRNA + (6R)-5,10-methylene-5,6,7,8-tetrahydrofolate + NADH + H(+) = 5-methyluridine(54) in tRNA + (6S)-5,6,7,8-tetrahydrofolate + NAD(+). It carries out the reaction uridine(54) in tRNA + (6R)-5,10-methylene-5,6,7,8-tetrahydrofolate + NADPH + H(+) = 5-methyluridine(54) in tRNA + (6S)-5,6,7,8-tetrahydrofolate + NADP(+). Functionally, catalyzes the folate-dependent formation of 5-methyl-uridine at position 54 (M-5-U54) in all tRNAs. In Lactococcus lactis subsp. cremoris (strain MG1363), this protein is Methylenetetrahydrofolate--tRNA-(uracil-5-)-methyltransferase TrmFO.